The following is a 242-amino-acid chain: Large ribosomal subunit protein uL1 (242 aa).

The protein belongs to the universal ribosomal protein uL1 family. As to quaternary structure, part of the 50S ribosomal subunit.

Its function is as follows. Binds directly to 23S rRNA. The L1 stalk is quite mobile in the ribosome, and is involved in E site tRNA release. In terms of biological role, protein L1 is also a translational repressor protein, it controls the translation of the L11 operon by binding to its mRNA. This chain is Large ribosomal subunit protein uL1, found in Wigglesworthia glossinidia brevipalpis.